The chain runs to 364 residues: Protein leg1b (364 aa).

A signal peptide spans 1–22; sequence MSEMGFLRSVAAVLLLAVFSHA. N-linked (GlcNAc...) asparagine glycosylation occurs at asparagine 70.

The protein belongs to the LEG1 family. In terms of tissue distribution, detected in all tissues tested, with the highest levels in serum (at protein level). At mRNA level, only expressed in liver.

Its subcellular location is the secreted. Its function is as follows. Involved in early development of liver, exocrine pancreas and intestine, probably through cell cycle regulation. In liver, its function is partially redundant with leg1a function. The chain is Protein leg1b from Danio rerio (Zebrafish).